The following is a 138-amino-acid chain: Phosphoribosyl-AMP cyclohydrolase (138 aa).

Residue D85 coordinates Mg(2+). C86 contributes to the Zn(2+) binding site. Residues D87 and D89 each coordinate Mg(2+). The Zn(2+) site is built by C102 and C109.

This sequence belongs to the PRA-CH family. As to quaternary structure, homodimer. It depends on Mg(2+) as a cofactor. Requires Zn(2+) as cofactor.

It is found in the cytoplasm. It catalyses the reaction 1-(5-phospho-beta-D-ribosyl)-5'-AMP + H2O = 1-(5-phospho-beta-D-ribosyl)-5-[(5-phospho-beta-D-ribosylamino)methylideneamino]imidazole-4-carboxamide. The protein operates within amino-acid biosynthesis; L-histidine biosynthesis; L-histidine from 5-phospho-alpha-D-ribose 1-diphosphate: step 3/9. Its function is as follows. Catalyzes the hydrolysis of the adenine ring of phosphoribosyl-AMP. The polypeptide is Phosphoribosyl-AMP cyclohydrolase (Methanothermobacter thermautotrophicus (strain ATCC 29096 / DSM 1053 / JCM 10044 / NBRC 100330 / Delta H) (Methanobacterium thermoautotrophicum)).